A 149-amino-acid polypeptide reads, in one-letter code: Large ribosomal subunit protein bL20m (149 aa).

A mitochondrion-targeting transit peptide spans 1–9; sequence MVFLSLSRW.

It belongs to the bacterial ribosomal protein bL20 family. In terms of assembly, component of the mitochondrial ribosome large subunit (39S) which comprises a 16S rRNA and about 50 distinct proteins.

It is found in the mitochondrion. The sequence is that of Large ribosomal subunit protein bL20m (mrpl20) from Xenopus laevis (African clawed frog).